The sequence spans 131 residues: D-ribose pyranase (131 aa).

Histidine 20 (proton donor) is an active-site residue. Substrate-binding positions include aspartate 28, histidine 98, and 120-122 (YAN).

Belongs to the RbsD / FucU family. RbsD subfamily. Homodecamer.

It localises to the cytoplasm. It carries out the reaction beta-D-ribopyranose = beta-D-ribofuranose. It functions in the pathway carbohydrate metabolism; D-ribose degradation; D-ribose 5-phosphate from beta-D-ribopyranose: step 1/2. Functionally, catalyzes the interconversion of beta-pyran and beta-furan forms of D-ribose. The protein is D-ribose pyranase of Bacillus cytotoxicus (strain DSM 22905 / CIP 110041 / 391-98 / NVH 391-98).